The following is a 151-amino-acid chain: 3-hydroxyacyl-[acyl-carrier-protein] dehydratase FabZ (151 aa).

Histidine 54 is an active-site residue.

The protein belongs to the thioester dehydratase family. FabZ subfamily.

It is found in the cytoplasm. It catalyses the reaction a (3R)-hydroxyacyl-[ACP] = a (2E)-enoyl-[ACP] + H2O. Its function is as follows. Involved in unsaturated fatty acids biosynthesis. Catalyzes the dehydration of short chain beta-hydroxyacyl-ACPs and long chain saturated and unsaturated beta-hydroxyacyl-ACPs. This chain is 3-hydroxyacyl-[acyl-carrier-protein] dehydratase FabZ, found in Idiomarina loihiensis (strain ATCC BAA-735 / DSM 15497 / L2-TR).